The following is a 558-amino-acid chain: Atlastin-1 (558 aa).

The tract at residues methionine 1–proline 28 is disordered. Residues methionine 1 to proline 34 form an N-terminal hypervariable region (HVR) region. The Cytoplasmic portion of the chain corresponds to methionine 1–alanine 449. Phosphoserine is present on residues serine 10, serine 22, and serine 23. The region spanning aspartate 64–arginine 309 is the GB1/RHD3-type G domain. Residues arginine 77, lysine 78, glycine 79, lysine 80, serine 81, phenylalanine 82, glutamine 148, arginine 217, aspartate 218, valine 276, and asparagine 279 each coordinate GDP. GTP is bound by residues arginine 77, lysine 78, glycine 79, lysine 80, serine 81, and phenylalanine 82. Serine 81 is a binding site for Mg(2+). GTP contacts are provided by arginine 217, aspartate 218, and valine 276. Residues methionine 347–serine 438 form a 3HB (three-helix bundle) domain region. Lysine 395 carries the N6-acetyllysine modification. The stretch at glutamate 412–lysine 439 forms a coiled coil. Residues lysine 439–threonine 447 form a linker region. Residues threonine 450–leucine 470 traverse the membrane as a helical segment. A topological domain (lumenal) is located at residue aspartate 471. The chain crosses the membrane as a helical span at residues isoleucine 472–alanine 492. The Cytoplasmic segment spans residues tyrosine 493–isoleucine 558. The interval asparagine 521 to isoleucine 558 is autoinhibitory domain.

Belongs to the TRAFAC class dynamin-like GTPase superfamily. GB1/RHD3 GTPase family. GB1 subfamily. As to quaternary structure, monomeric and homodimeric. The homodimer, transiently formed by two molecules on opposing membranes, is the active form mediating ER membrane fusion. Interacts with REEP1, REEP5, RTN3 and RTN4 (via the transmembrane region); these proteins are involved in endoplasmic reticulum tubular network organization. Interacts with ZFYVE27; both proteins are involved in endoplasmic reticulum tubular network organization. Interacts with ARL6IP1; both proteins are involved in endoplasmic reticulum tubular network organization. Interacts with SPAST; the interaction is direct, could recruit SPAST to Golgi membranes. Interacts (via N-terminal region) with MAP4K4 (via CNH regulatory domain). May interact with TMED2. Interacts with CPT1C. Post-translationally, phosphorylated. Phosphorylation, by different kinases, of the N-terminal hypervariable region (HVR) regulates the ATL1-mediated membrane tethering step.

The protein localises to the endoplasmic reticulum membrane. Its subcellular location is the golgi apparatus membrane. The protein resides in the cell projection. It is found in the axon. The enzyme catalyses GTP + H2O = GDP + phosphate + H(+). Atlastin-1 (ATL1) is a membrane-anchored GTPase that mediates the GTP-dependent fusion of endoplasmic reticulum (ER) membranes, maintaining the continuous ER network. It facilitates the formation of three-way junctions where ER tubules intersect. Two atlastin-1 on neighboring ER tubules bind GTP and form loose homodimers through the GB1/RHD3-type G domains and 3HB regions. Upon GTP hydrolysis, the 3HB regions tighten, pulling the membranes together to drive their fusion. After fusion, the homodimer disassembles upon release of inorganic phosphate (Pi). Subsequently, GDP dissociates, resetting the monomers to a conformation ready for a new fusion cycle. May also regulate more or less directly Golgi biogenesis. Indirectly regulates axonal development. This is Atlastin-1 from Mus musculus (Mouse).